A 504-amino-acid chain; its full sequence is Galactokinase (504 aa).

Positions 47, 53, 54, and 56 each coordinate alpha-D-galactose. Positions 150, 152, 154, and 155 each coordinate ATP. Alpha-D-galactose contacts are provided by Asn-196 and Asp-200. The Proton acceptor role is filled by Asp-200. ATP-binding residues include Ser-244, Asn-245, and Lys-246. Alpha-D-galactose is bound at residue Tyr-254.

Belongs to the GHMP kinase family. GalK subfamily.

The enzyme catalyses alpha-D-galactose + ATP = alpha-D-galactose 1-phosphate + ADP + H(+). Its pathway is carbohydrate metabolism; galactose metabolism. In terms of biological role, galactokinase is a key enzyme in the galactose metabolism where it catalyzes the conversion of alpha-D-galactose to galactose 1-phosphate. Can also induce the transcription of the gal genes in response to the organism being challenged with galactose as the sole source of carbon. This is Galactokinase from Candida parapsilosis (Yeast).